The chain runs to 459 residues: Magnesium transporter MRS2-11, chloroplastic (459 aa).

Residues 1–62 (MALTPIPSTF…EALKVLSRSK (62 aa)) constitute a chloroplast transit peptide. The tract at residues 76–122 (GDYESLNVSDDDDGSDSNSSDGDNGGGRDDSKKIDSSSSSSSSDSTS) is disordered. Positions 101 to 110 (GGRDDSKKID) are enriched in basic and acidic residues. Residues 111–122 (SSSSSSSSDSTS) are compositionally biased toward low complexity. A run of 2 helical transmembrane segments spans residues 397–417 (LLLQ…GIFG) and 430–450 (AFWL…FLMY). A Required for magnesium transport activity motif is present at residues 417-419 (GMN).

Belongs to the CorA metal ion transporter (MIT) (TC 1.A.35.5) family. In terms of tissue distribution, expressed in the green part of the plant. Preferentially expressed in the spongy mesophyll cells and stomata of young leaves but also detected in cotyledons and at the base of the leaf petioles.

Its subcellular location is the plastid. It localises to the chloroplast membrane. In terms of biological role, high-affinity magnesium transporter that mediates the influx of magnesium in chloroplast. The sequence is that of Magnesium transporter MRS2-11, chloroplastic (MRS2-11) from Arabidopsis thaliana (Mouse-ear cress).